Consider the following 296-residue polypeptide: MYQRLLKSLNHLNPRAWDFVQLTRMDKPIGIYLLLWPTLWALWIAGKGSPSLINIVIFVLGVVLTRAGGCVINDWADRKVDGHVKRTEQRPLVSGKISSKEALVFFAVLMGISFLLVLLTNATTILLSLGGLALAASYPFMKRYTYYPQVVLGAAFSWGMPMAFTAETGDLPATAWLLYIANLLWTVGYDTYYAMTDRDDDLKIGVKSTAILFGDADRVIILTLQGLSLVCLLLAGARFELGGWFHLGLLAAAGCFAWEFWYTRDKDRMKCFKAFLHNHWAGLAIFVGIVADYAFR.

Helical transmembrane passes span 28 to 48, 52 to 72, 102 to 122, 146 to 166, 169 to 189, 219 to 239, 241 to 261, and 275 to 295; these read PIGIYLLLWPTLWALWIAGKG, LINIVIFVLGVVLTRAGGCVI, ALVFFAVLMGISFLLVLLTNA, YYPQVVLGAAFSWGMPMAFTA, GDLPATAWLLYIANLLWTVGY, VIILTLQGLSLVCLLLAGARF, LGGWFHLGLLAAAGCFAWEFW, and FLHNHWAGLAIFVGIVADYAF.

Belongs to the UbiA prenyltransferase family. Mg(2+) serves as cofactor.

It localises to the cell inner membrane. It carries out the reaction all-trans-octaprenyl diphosphate + 4-hydroxybenzoate = 4-hydroxy-3-(all-trans-octaprenyl)benzoate + diphosphate. The protein operates within cofactor biosynthesis; ubiquinone biosynthesis. Functionally, catalyzes the prenylation of para-hydroxybenzoate (PHB) with an all-trans polyprenyl group. Mediates the second step in the final reaction sequence of ubiquinone-8 (UQ-8) biosynthesis, which is the condensation of the polyisoprenoid side chain with PHB, generating the first membrane-bound Q intermediate 3-octaprenyl-4-hydroxybenzoate. This Pseudomonas fluorescens (strain SBW25) protein is 4-hydroxybenzoate octaprenyltransferase.